The sequence spans 318 residues: NADH-ubiquinone oxidoreductase chain 1 (318 aa).

A run of 8 helical transmembrane segments spans residues 2-22, 70-90, 100-120, 147-167, 172-192, 222-242, 253-273, and 294-314; these read FMIN…FLTL, MFIL…IPLP, LGVL…LWSG, AIIL…TLII, MWLI…TLAE, LFFM…AILF, ELYT…FLWI, and LPLT…TSGI.

The protein belongs to the complex I subunit 1 family. As to quaternary structure, core subunit of respiratory chain NADH dehydrogenase (Complex I) which is composed of 45 different subunits.

Its subcellular location is the mitochondrion inner membrane. The enzyme catalyses a ubiquinone + NADH + 5 H(+)(in) = a ubiquinol + NAD(+) + 4 H(+)(out). Core subunit of the mitochondrial membrane respiratory chain NADH dehydrogenase (Complex I) which catalyzes electron transfer from NADH through the respiratory chain, using ubiquinone as an electron acceptor. Essential for the catalytic activity and assembly of complex I. In Bos indicus (Zebu), this protein is NADH-ubiquinone oxidoreductase chain 1 (MT-ND1).